A 1243-amino-acid polypeptide reads, in one-letter code: Tau-tubulin kinase 2 (1243 aa).

The Protein kinase domain maps to 21–284 (WKVLRKIGGG…LLTSVFDNSI (264 aa)). ATP contacts are provided by residues 27–35 (IGGGGFGEI) and Lys-50. Asp-141 functions as the Proton acceptor in the catalytic mechanism. Ser-445 carries the post-translational modification Phosphoserine. The segment covering 674–683 (VASTQSTSGS) has biased composition (polar residues). Disordered regions lie at residues 674 to 695 (VAST…KKDL) and 737 to 761 (TGHD…DPPD). The residue at position 786 (Ser-786) is a Phosphoserine. A disordered region spans residues 1063-1086 (QINGSASPQFLPRPPPGKPPVRPG). The span at 1073-1084 (LPRPPPGKPPVR) shows a compositional bias: pro residues. Ser-1102 is modified (phosphoserine). The segment covering 1115 to 1129 (QNGSQKSRSTTQCKS) has biased composition (polar residues). A disordered region spans residues 1115–1243 (QNGSQKSRST…KSKPASKLSR (129 aa)). 3 stretches are compositionally biased toward low complexity: residues 1144 to 1170 (VVPR…PSRA), 1187 to 1202 (SKSP…SRRS), and 1227 to 1243 (SSKT…KLSR).

The protein belongs to the protein kinase superfamily. CK1 Ser/Thr protein kinase family. As to quaternary structure, interacts with CEP164. Interacts with MCRS1; the interaction is required for recruitment of TTBK2 to the mother centriole.

It is found in the cell projection. It localises to the cilium. The protein resides in the cytoplasm. The protein localises to the cytoskeleton. Its subcellular location is the cilium basal body. It is found in the microtubule organizing center. It localises to the centrosome. The protein resides in the centriole. The protein localises to the cytosol. Its subcellular location is the nucleus. It catalyses the reaction L-seryl-[protein] + ATP = O-phospho-L-seryl-[protein] + ADP + H(+). The catalysed reaction is L-threonyl-[protein] + ATP = O-phospho-L-threonyl-[protein] + ADP + H(+). Functionally, serine/threonine kinase that acts as a key regulator of ciliogenesis: controls the initiation of ciliogenesis by binding to the distal end of the basal body and promoting the removal of CCP110, which caps the mother centriole, leading to the recruitment of IFT proteins, which build the ciliary axoneme. Has some substrate preference for proteins that are already phosphorylated on a Tyr residue at the +2 position relative to the phosphorylation site. Able to phosphorylate tau on serines in vitro. Phosphorylates MPHOSPH9 which promotes its ubiquitination and proteasomal degradation, loss of MPHOSPH9 facilitates the removal of the CP110-CEP97 complex (a negative regulator of ciliogenesis) from the mother centrioles, promoting the initiation of ciliogenesis. Required for recruitment of CPLANE2 and INTU to the mother centriole. The polypeptide is Tau-tubulin kinase 2 (Ttbk2) (Mus musculus (Mouse)).